Here is a 264-residue protein sequence, read N- to C-terminus: ATP synthase subunit a (264 aa).

Helical transmembrane passes span 39–59, 97–117, 139–159, 205–225, and 239–259; these read LDTLIISVVLGALFILIFYII, VAPLALTIFIWVFLMNFMDLV, TADPTLTFAMSITVFVLVVFY, LFGNLFAGELIFILIALLPWW, and LLVITVQAFIFMMLTVVYISL.

This sequence belongs to the ATPase A chain family. F-type ATPases have 2 components, CF(1) - the catalytic core - and CF(0) - the membrane proton channel. CF(1) has five subunits: alpha(3), beta(3), gamma(1), delta(1), epsilon(1). CF(0) has three main subunits: a(1), b(2) and c(9-12). The alpha and beta chains form an alternating ring which encloses part of the gamma chain. CF(1) is attached to CF(0) by a central stalk formed by the gamma and epsilon chains, while a peripheral stalk is formed by the delta and b chains.

It is found in the cell inner membrane. Its function is as follows. Key component of the proton channel; it plays a direct role in the translocation of protons across the membrane. This chain is ATP synthase subunit a, found in Coxiella burnetii (strain CbuG_Q212) (Coxiella burnetii (strain Q212)).